The following is a 942-amino-acid chain: Isoleucine--tRNA ligase (942 aa).

The short motif at 58–68 (PYANGDIHIGH) is the 'HIGH' region element. Glutamate 566 provides a ligand contact to L-isoleucyl-5'-AMP. The 'KMSKS' region signature appears at 607 to 611 (KMSKS). Lysine 610 serves as a coordination point for ATP. Zn(2+)-binding residues include cysteine 905, cysteine 908, cysteine 925, and cysteine 928.

The protein belongs to the class-I aminoacyl-tRNA synthetase family. IleS type 1 subfamily. As to quaternary structure, monomer. It depends on Zn(2+) as a cofactor.

It is found in the cytoplasm. It catalyses the reaction tRNA(Ile) + L-isoleucine + ATP = L-isoleucyl-tRNA(Ile) + AMP + diphosphate. Functionally, catalyzes the attachment of isoleucine to tRNA(Ile). As IleRS can inadvertently accommodate and process structurally similar amino acids such as valine, to avoid such errors it has two additional distinct tRNA(Ile)-dependent editing activities. One activity is designated as 'pretransfer' editing and involves the hydrolysis of activated Val-AMP. The other activity is designated 'posttransfer' editing and involves deacylation of mischarged Val-tRNA(Ile). The chain is Isoleucine--tRNA ligase from Vibrio parahaemolyticus serotype O3:K6 (strain RIMD 2210633).